The following is a 527-amino-acid chain: Mitochondrial substrate carrier family protein V (527 aa).

The segment covering 1–14 (MNSSDFKKSFKEST) has biased composition (basic and acidic residues). The interval 1-29 (MNSSDFKKSFKESTENNSNTYRPSKTLNT) is disordered. The Mitochondrial intermembrane segment spans residues 1–132 (MNSSDFKKSF…VSKKSISKEN (132 aa)). A compositionally biased stretch (polar residues) spans 15-29 (ENNSNTYRPSKTLNT). 3 Solcar repeats span residues 130–220 (KENV…CKKH), 253–345 (MTVP…FKII), and 430–519 (VNMI…CKDL). Residues 133–153 (VNYLVSGSIAGAISRSATAGF) form a helical membrane-spanning segment. Topologically, residues 154 to 187 (ERLTIIQQVQGMSQNLSQGYVGCIAAMKEMVKRE) are mitochondrial matrix. Residues 188–208 (GFKSIWKGNGANIVKVSPNSG) form a helical membrane-spanning segment. Topologically, residues 209 to 258 (IRFLTYEFCKKHFLDNSSNHPSSSSIENGIDGNGVGCGSGSEMKMTVPQT) are mitochondrial intermembrane. Residues 259–279 (MFSGAMAGLTSTFFTYPLDVV) form a helical membrane-spanning segment. The Mitochondrial matrix segment spans residues 280 to 324 (RIRLSLQGSCSNDYAAHRYNGITHSFFKIHKDEGVKGLYKGLGTS). Residues 325-345 (IASIVPWVSISFATYEGFKII) traverse the membrane as a helical segment. The Mitochondrial intermembrane segment spans residues 346–435 (CKKMILNYQI…LKKGVNMICD (90 aa)). A helical transmembrane segment spans residues 436–456 (FVCGALSGAVTMTVCYPLDVL). The Mitochondrial matrix portion of the chain corresponds to 457–487 (RRRMMIQGIGGNKVLYKNGWDATKKILSNEG). Residues 488 to 508 (LVAFYHGIIPAYFKVVPTVAI) form a helical membrane-spanning segment. Residues 509-527 (SFAVYEICKDLGSNKYQQK) are Mitochondrial intermembrane-facing.

Belongs to the mitochondrial carrier (TC 2.A.29) family.

The protein resides in the mitochondrion inner membrane. Its function is as follows. Mitochondrial solute carriers shuttle metabolites, nucleotides, and cofactors through the mitochondrial inner membrane. This chain is Mitochondrial substrate carrier family protein V (mcfV), found in Dictyostelium discoideum (Social amoeba).